The following is a 328-amino-acid chain: POU domain, class 5, transcription factor 2 (328 aa).

Positions 1–25 are disordered; that stretch reads MAGHRPSNHFCPLPGSGGGGPRGPM. The POU-specific domain occupies 118-192; that stretch reads DISGILKELQ…LLKKWLKEVE (75 aa). A DNA-binding region (homeobox) is located at residues 210 to 269; the sequence is GKWRRASRERRIGNSLEKFFQRCPKPTPQQISHIAGCLQLQKDVVRVWFYNRSKMGSRPT.

This sequence belongs to the POU transcription factor family. Class-5 subfamily. In terms of tissue distribution, expressed in skeletal and cardiac muscles, brain, heart and lung. Little or no detectable expression found in pancreas, kidney, liver or placenta.

The protein resides in the nucleus. In terms of biological role, transcription factor that binds preferentially to the octamer motif (5'-ATGTTAAT-3'). May exert a regulatory function in meiotic events that are required for terminal differentiation of male germ cell. In Homo sapiens (Human), this protein is POU domain, class 5, transcription factor 2 (POU5F2).